Consider the following 144-residue polypeptide: Small ribosomal subunit protein eS19B (144 aa).

This sequence belongs to the eukaryotic ribosomal protein eS19 family. In terms of assembly, component of the small ribosomal subunit (SSU). Mature yeast ribosomes consist of a small (40S) and a large (60S) subunit. The 40S small subunit contains 1 molecule of ribosomal RNA (18S rRNA) and 33 different proteins (encoded by 57 genes). The large 60S subunit contains 3 rRNA molecules (25S, 5.8S and 5S rRNA) and 46 different proteins (encoded by 81 genes).

It is found in the cytoplasm. Functionally, component of the ribosome, a large ribonucleoprotein complex responsible for the synthesis of proteins in the cell. The small ribosomal subunit (SSU) binds messenger RNAs (mRNAs) and translates the encoded message by selecting cognate aminoacyl-transfer RNA (tRNA) molecules. The large subunit (LSU) contains the ribosomal catalytic site termed the peptidyl transferase center (PTC), which catalyzes the formation of peptide bonds, thereby polymerizing the amino acids delivered by tRNAs into a polypeptide chain. The nascent polypeptides leave the ribosome through a tunnel in the LSU and interact with protein factors that function in enzymatic processing, targeting, and the membrane insertion of nascent chains at the exit of the ribosomal tunnel. eS19 is required for proper maturation of the small (40S) ribosomal subunit. Binds to 40S pre-ribosomal particles, probably required after association of NOC4 but before association of ENP1, TSR1 and RIO2 with 20/21S pre-rRNA. Its function is as follows. Required for proper maturation of the small (40S) ribosomal subunit. Binds to 40s pre-ribosomal particles, probably required after association of NOC4 but before association of ENP1, TSR1 and RIO2 with 20/21S pre-rRNA. The sequence is that of Small ribosomal subunit protein eS19B from Saccharomyces cerevisiae (strain ATCC 204508 / S288c) (Baker's yeast).